The following is a 169-amino-acid chain: MKKITTGLIIVVAAIIVLSIQFMTESGPFKSAGLSNANEQTYKVIRVIDGDTIIVDKDGKQQNLRMIGVDTPETVKPNTPVQPYGKEASDFTKRHLTNQKVRLEYDKQEKDRYGRTLAYVWLGKEMFNEKLAKEGLARAKFYRPNYKYQERIEQAQKQAQKLKKNIWSN.

Residues 1-26 form the signal peptide; it reads MKKITTGLIIVVAAIIVLSIQFMTES. Residues arginine 65, glutamate 73, and arginine 115 contribute to the active site.

Belongs to the thermonuclease family. The cofactor is Ca(2+).

The protein localises to the secreted. It catalyses the reaction Endonucleolytic cleavage to nucleoside 3'-phosphates and 3'-phosphooligonucleotide end-products.. Its function is as follows. Enzyme that catalyzes the hydrolysis of both DNA and RNA at the 5'-position of the phosphodiester bond. This Staphylococcus hyicus protein is Thermonuclease (nucH).